Here is a 219-residue protein sequence, read N- to C-terminus: Vacuolar protein sorting-associated protein 20 homolog 1 (219 aa).

A coiled-coil region spans residues Ser-20–Leu-60. Residues Pro-171–Ala-219 are disordered. Basic and acidic residues predominate over residues Pro-174–Leu-186. A compositionally biased stretch (polar residues) spans Pro-194–Lys-209.

Belongs to the SNF7 family. In terms of assembly, component of the endosomal sorting required for transport complex III (ESCRT-III), composed at least of VPS2, VPS20, VPS24 and VPS32. Interacts with SKD1.

Its subcellular location is the endosome. Functionally, component of the ESCRT-III complex, which is required for multivesicular bodies (MVBs) formation and sorting of endosomal cargo proteins into MVBs. The ESCRT-III complex is probably involved in the concentration of MVB cargo. This is Vacuolar protein sorting-associated protein 20 homolog 1 (VPS20.1) from Arabidopsis thaliana (Mouse-ear cress).